A 184-amino-acid chain; its full sequence is Photosystem I assembly protein Ycf4 (184 aa).

Helical transmembrane passes span 24-44 and 57-77; these read WAFI…SSYI and IIFF…LFIS.

Belongs to the Ycf4 family.

It localises to the plastid. Its subcellular location is the chloroplast thylakoid membrane. In terms of biological role, seems to be required for the assembly of the photosystem I complex. This chain is Photosystem I assembly protein Ycf4, found in Buxus microphylla (Littleleaf boxwood).